Reading from the N-terminus, the 98-residue chain is MRTYEIMYVVRPNIEEDAKKAVVERFNGILASEGSEVLEEKDWGKRRLAYEIEDFKEGFYNIVRIKTDNNRATDEFQRLAKISDDIIRYIVIREDQDK.

Belongs to the bacterial ribosomal protein bS6 family.

In terms of biological role, binds together with bS18 to 16S ribosomal RNA. This is Small ribosomal subunit protein bS6 from Staphylococcus haemolyticus (strain JCSC1435).